Here is a 55-residue protein sequence, read N- to C-terminus: Chromatin protein Cren7 (55 aa).

This sequence belongs to the Cren7 family. Monomer. Post-translationally, methylated at multiple sites, to varying extents.

It localises to the chromosome. The protein resides in the cytoplasm. A chromatin protein, binds double-stranded DNA without sequence specificity. Constrains negative DNA supercoils. This is Chromatin protein Cren7 from Ignicoccus hospitalis (strain KIN4/I / DSM 18386 / JCM 14125).